A 330-amino-acid polypeptide reads, in one-letter code: MAYHTPFAAQPPVASSGLPLTLISLDDWALVTLTGADRVKYLQGQVTADIDALSADQHVLCAHCDAKGKMWSNLRLFYRGEGLAFIERRSLLDNQLSELKKYAVFSKVVIEPQPDAVLIGVAGSQAKTALAEIFTELPSAEHPVTQMGNSTLLHFSLPAERFLLVTDTEQAQQLVEKLAGRAQFNDSKQWLALDIEAGFPIIDAANSAQFIPQATNIQALNGISFTKGCYTGQEMVARAKYRGANKRALYWLAGNASRVPAAGEDLEWQLGENWRRTGTVLSAIQLNDGTVWVQAVLNNDLAADSVLRVRDDALGTLAIQPLPYSLAEDK.

W28 and W190 together coordinate folate.

The protein belongs to the tRNA-modifying YgfZ family.

The protein resides in the cytoplasm. Functionally, folate-binding protein involved in regulating the level of ATP-DnaA and in the modification of some tRNAs. It is probably a key factor in regulatory networks that act via tRNA modification, such as initiation of chromosomal replication. This Yersinia pestis bv. Antiqua (strain Antiqua) protein is tRNA-modifying protein YgfZ.